We begin with the raw amino-acid sequence, 185 residues long: MSASELKEMEQKMEQAVQALSKNLASVRAGRANPSILDSVFVDYYGASTPLNQLASVGAPEARLLTITPYDKSAIGDIEKAIQKADLGLSPSSDGNIIRINIPALTQERRKDLVKVVGKYSEEAKVQIRNIRRDTNDQLKKMEKNGDLTEDDLRGFQDDVQTSTNDYINKIDQLAKNKENEIMEV.

This sequence belongs to the RRF family.

It is found in the cytoplasm. Its function is as follows. Responsible for the release of ribosomes from messenger RNA at the termination of protein biosynthesis. May increase the efficiency of translation by recycling ribosomes from one round of translation to another. This chain is Ribosome-recycling factor, found in Oceanobacillus iheyensis (strain DSM 14371 / CIP 107618 / JCM 11309 / KCTC 3954 / HTE831).